A 1184-amino-acid chain; its full sequence is MSGHSGHDVKYGRHRTRRSFARISEVLELPNLIEIQTASYQWFLDEGLREMFRDISPIEDFAGNLSLEFIDYDLGEPKYSVEESKNRDANYAAPLRVKLRLINKETGEVKDQEVFMGDFPLMTEMGTFIINGAERVIVSQLVRSPGVYFNGKLDKNGKKGFGSTVIPNRGAWLEYETDAKDVVHVRIDRTRKLPVTVLLRALGFGSDQEIIDLIGDNDYLRNTLEKDNTDNAEKALLEIYERLRPGEPPTVDNARSLLVSRFFDPKRYDLASVGRYKINKKLHLKNRLFNQTLAETLVDPETGEIIASKGDILDRRNLDQIIPNLENGVGFRTLRPTDGVMEDSVLVQSIKIYAPNDEEKEINIIGNAYIEENVKHITPSDIISSISYFFNLLHGVGDTDDIDHLGNRRLRSVGELLQNQFRIGLSRMERVVRERMSIQDMTTITPQQLINIRPVVASIKEFFGSSQLSQFMDQTNPLGELTHKRRLSALGPGGLTRERAGYEVRDVHYSHYGRMCPIETPEGPNIGLINSLSSFAKVNKFGFIETPYRRVDPETNRVTDKIDYLTADEEDNYVVAQANSKLDEQGTFTEEEVMARFRSENLAVEKERIDYMDVSPKQVVSVATACIPFLENDDSNRALMGANMQRQAVPLMHPEAPFVGTGMEHVSAKDSGAAVTAKHDGIVEHVEAREIWVRRVSLVDGKEVTGGIDKYTLRKFVRSNQGTCYNQRPNVAEGDRVVKGEILGNGPSMDSGELALGRNVLVAFMTWDGYNYEDAIIMSERLVKDDVYTSIHIEEFESEARDTKLGPEEMTRDIPNVGEDALRDLDERGIIRVGAEVKDNDLLVGKVTPKGVTELTAEERLLHAIFGEKAREVRDTSLRVPHGGGGIVLDVKIFTREAGDELPPGVNQLVRVYIVQKRKIHEGDKMAGRHGNKGVISRILPEEDMPFMPDGTPVDIMLNPLGVPSRMNIGQVLELHLGMAARALGIHVATPVFDGANEEDVWSTVEEAGMARDAKTVLYDGRSGEAFDNRISVGVMYMIKLAHMVDDKLHARSTGPYSLVTQQPLGGKAQFGGQRFGEMEVWALEAYGAAYTLQEILTIKSDDVVGRVKTYEAIVKGESVPEPGVPESFKVLIKELQSLGMDVKMLSADEEEIEMRDMDDDDFTNQNDAFNIVQPENAAAEKTE.

Positions 1160–1184 (DDDFTNQNDAFNIVQPENAAAEKTE) are disordered.

Belongs to the RNA polymerase beta chain family. As to quaternary structure, the RNAP catalytic core consists of 2 alpha, 1 beta, 1 beta' and 1 omega subunit. When a sigma factor is associated with the core the holoenzyme is formed, which can initiate transcription.

It carries out the reaction RNA(n) + a ribonucleoside 5'-triphosphate = RNA(n+1) + diphosphate. In terms of biological role, DNA-dependent RNA polymerase catalyzes the transcription of DNA into RNA using the four ribonucleoside triphosphates as substrates. This is DNA-directed RNA polymerase subunit beta from Listeria welshimeri serovar 6b (strain ATCC 35897 / DSM 20650 / CCUG 15529 / CIP 8149 / NCTC 11857 / SLCC 5334 / V8).